A 3433-amino-acid chain; its full sequence is Genome polyprotein (3433 aa).

The tract at residues 2 to 15 (SKKPGGPGKSRAVN) is interaction with host EXOC1. Residues 2 to 105 (SKKPGGPGKS…NRRSSKQKKR (104 aa)) lie on the Cytoplasmic side of the membrane. Residues 37 to 72 (LIDGRGPTRFVLALLAFFRFTAIAPTRAVLDRWRSV) are hydrophobic; homodimerization of capsid protein C. The propeptide at 106 to 123 (GGKTGIAFMIGLIAGVGA) is ER anchor for the capsid protein C, removed in mature form by serine protease NS3. A helical transmembrane segment spans residues 106–126 (GGKTGIAFMIGLIAGVGAVTL). Topologically, residues 127–248 (SNFQGKVMMT…KATRYLVKTE (122 aa)) are extracellular. Asn138 carries N-linked (GlcNAc...) asparagine; by host glycosylation. Residues 249-269 (SWILRNPGYALVAAVIGWMLG) form a helical membrane-spanning segment. Residues 270–273 (SNTM) lie on the Cytoplasmic side of the membrane. The helical transmembrane segment at 274–290 (QRVVFAVLLLLVAPAYS) threads the bilayer. The Extracellular portion of the chain corresponds to 291–743 (FNCLGMSNRD…QVFGGAFRSL (453 aa)). Disulfide bonds link Cys293/Cys320, Cys350/Cys406, Cys364/Cys395, and Cys382/Cys411. The tract at residues 388 to 401 (DRGWGNGCGLFGKG) is fusion peptide. Asn444 is a glycosylation site (N-linked (GlcNAc...) asparagine; by host). Cystine bridges form between Cys480/Cys578 and Cys595/Cys626. Residues 744-764 (FGGMSWITQGLLGALLLWMGI) traverse the membrane as a helical segment. Topologically, residues 765 to 770 (NARDRS) are cytoplasmic. The chain crosses the membrane as a helical span at residues 771 to 791 (IALTFLAVGGVLLFLSVNVHA). At 792–1216 (DTGCAIDISR…AFAESNSGGD (425 aa)) the chain is on the extracellular side. Cystine bridges form between Cys795–Cys806 and Cys846–Cys934. N-linked (GlcNAc...) asparagine; by host glycans are attached at residues Asn921, Asn966, and Asn998. 4 disulfide bridges follow: Cys970–Cys1014, Cys1071–Cys1120, Cys1082–Cys1103, and Cys1104–Cys1107. The chain crosses the membrane as a helical span at residues 1217 to 1237 (VVHLALMATFKIQPVFMVASF). The Cytoplasmic portion of the chain corresponds to 1238–1247 (LKARWTNQEN). The chain crosses the membrane as a helical span at residues 1248–1268 (ILLMLAAAFFQMAYYDARQIL). Residues 1269 to 1288 (LWEMPDVLNSLAVAWMILRA) lie on the Lumenal side of the membrane. The chain crosses the membrane as a helical span at residues 1289 to 1309 (ITFTTTSNVVVPLLALLTPGL). Topologically, residues 1310–1316 (RCLNLDV) are cytoplasmic. Residues 1317-1335 (YRILLLMVGIGSLIREKRS) form a helical membrane-spanning segment. The Lumenal portion of the chain corresponds to 1336–1345 (AAAKKKGASL). The chain crosses the membrane as a helical span at residues 1346–1366 (LCLALASTGFFNPMILAAGLV). Residues 1367–1375 (ACDPNRKRG) lie on the Cytoplasmic side of the membrane. A helical membrane pass occupies residues 1376 to 1396 (WPATEVMTAVGLMFAIVGGLA). Residues 1397-1399 (ELD) lie on the Lumenal side of the membrane. The chain crosses the membrane as a helical span at residues 1400-1420 (IDSMAIPMTIAGLMFAAFVIS). Residues 1421-1477 (GKSTDMWIERTADISWEGDAEITGSSERVDVRLDDDGNFQLMNDPGAPWKIWMLRMA) are Cytoplasmic-facing. The tract at residues 1428–1467 (IERTADISWEGDAEITGSSERVDVRLDDDGNFQLMNDPGA) is interacts with and activates NS3 protease. Positions 1478-1498 (CLAISAYTPWAILPSVVGFWI) form an intramembrane region, helical. At 1499 to 2174 (TLQYTKRGGV…RMALEELPDA (676 aa)) the chain is on the cytoplasmic side. The region spanning 1506-1683 (GGVLWDTPSP…ERMDEPVPAG (178 aa)) is the Peptidase S7 domain. Catalysis depends on charge relay system; for serine protease NS3 activity residues His1556, Asp1580, and Ser1640. Residues 1686–1842 (PEMLRKKQIT…ESNAPISDLQ (157 aa)) enclose the Helicase ATP-binding domain. The tract at residues 1690 to 1693 (RKKQ) is important for RNA-binding. Residue 1699-1706 (LHPGAGKT) coordinates ATP. The short motif at 1790 to 1793 (DEAH) is the DEAH box element. Positions 1853 to 2018 (GYEWITEYIG…GLIAQFYQPE (166 aa)) constitute a Helicase C-terminal domain. Position 1894 is an N6-acetyllysine; by host (Lys1894). The regulates the ATPase activity of NS3 helicase stretch occupies residues 2169–2173 (EELPD). A helical transmembrane segment spans residues 2175–2195 (LQTIALIALLSVMTMGVFFLL). Residues 2196–2200 (MQRKG) lie on the Lumenal side of the membrane. The helical intramembrane region spans 2201 to 2221 (IGKIGLGGVVLGAATFFCWMA). Residue Glu2222 is a topological domain, lumenal. Residues 2223–2243 (VPGTKIAGMLLLSLLLMIVLI) traverse the membrane as a helical segment. Over 2244-2258 (PEPEKQRSQTDNQLA) the chain is Cytoplasmic. The helical transmembrane segment at 2259-2273 (VFLICVLTLVGAVAA) threads the bilayer. Residues 2274-2312 (NEMGWLDKTKSDISGLFGQRIETKENFSIGEFLLDLRPA) lie on the Lumenal side of the membrane. An intramembrane region (helical) is located at residues 2313–2333 (TAWSLYAVTTAVLTPLLKHLI). Over 2334–2380 (TSDYITTSLTSINVQASALFTLARGFPFVDVGVSALLLAAGCWGQVT) the chain is Lumenal. Residues 2381-2401 (LTVTVTSATLLFCHYAYMVPG) traverse the membrane as a helical segment. Residues 2402–2444 (WQAEAMRSAQRRTAAGIMKNAVVDGIVATDVPELERTTPIMQK) lie on the Cytoplasmic side of the membrane. Residues 2445–2465 (KVGQVMLILVSLAALVVNPSV) form a helical membrane-spanning segment. At 2466–2470 (KTVRE) the chain is on the lumenal side. Residues 2471 to 2491 (AGILITAAAVTLWENGASSVW) form a helical membrane-spanning segment. Residues 2492-3433 (NATTAIGLCH…DTTLVEDTVL (942 aa)) are Cytoplasmic-facing. Residues 2529 to 2794 (GGAKGRTLGE…DVNLGSGTRA (266 aa)) enclose the mRNA cap 0-1 NS5-type MT domain. Residue Ser2584 coordinates S-adenosyl-L-methionine. Ser2584 carries the post-translational modification Phosphoserine. Lys2589 functions as the For 2'-O-MTase activity in the catalytic mechanism. Gly2614, Trp2615, Thr2632, Lys2633, Asp2659, and Val2660 together coordinate S-adenosyl-L-methionine. The active-site For 2'-O-MTase activity is Asp2674. Residue Ile2675 participates in S-adenosyl-L-methionine binding. Residues Lys2710 and Glu2746 each act as for 2'-O-MTase activity in the active site. Tyr2748 provides a ligand contact to S-adenosyl-L-methionine. The Nuclear localization signal motif lies at 2917–2919 (REK). Residues Glu2968, His2972, Cys2977, and Cys2980 each coordinate Zn(2+). Residues 3058-3210 (GRIYADDTAG…KPLDDRFATS (153 aa)) enclose the RdRp catalytic domain. Zn(2+)-binding residues include His3245, Cys3261, and Cys3380. The short motif at 3431 to 3433 (TVL) is the PDZ-binding element.

The protein in the N-terminal section; belongs to the class I-like SAM-binding methyltransferase superfamily. mRNA cap 0-1 NS5-type methyltransferase family. In terms of assembly, homodimer; further assembles as a homotetramer. Interacts (via N-terminus) with host EXOC1 (via C-terminus); this interaction results in EXOC1 degradation through the proteasome degradation pathway. Forms heterodimers with envelope protein E in the endoplasmic reticulum and Golgi. As to quaternary structure, homodimer; in the endoplasmic reticulum and Golgi. Interacts with protein prM. Interacts with non-structural protein 1. In terms of assembly, homodimer; Homohexamer when secreted. Interacts with envelope protein E. NS1 interacts with NS4B. Interacts with host complement protein CFH; this interaction leads to the degradation of C3. Interacts (via N-terminus) with serine protease NS3. As to quaternary structure, forms a heterodimer with serine protease NS3. May form homooligomers. In terms of assembly, forms a heterodimer with NS2B. Interacts with non-structural protein 2A (via N-terminus). Interacts with NS4B. Interacts with unphosphorylated RNA-directed RNA polymerase NS5; this interaction stimulates RNA-directed RNA polymerase NS5 guanylyltransferase activity. Interacts with Serine protease/Helicase NS3. Interacts with NS1. As to quaternary structure, homodimer. Interacts with host STAT2; this interaction inhibits the phosphorylation of the latter, and, when all viral proteins are present (polyprotein), targets STAT2 for degradation. Interacts with serine protease NS3. In terms of processing, specific enzymatic cleavages in vivo yield mature proteins. Cleavages in the lumen of endoplasmic reticulum are performed by host signal peptidase, whereas cleavages in the cytoplasmic side are performed by serine protease NS3. Signal cleavage at the 2K-4B site requires a prior NS3 protease-mediated cleavage at the 4A-2K site. Post-translationally, cleaved in post-Golgi vesicles by a host furin, releasing the mature small envelope protein M, and peptide pr. This cleavage is incomplete as up to 30% of viral particles still carry uncleaved prM. N-glycosylated. In terms of processing, N-glycosylated. The excreted form is glycosylated and this is required for efficient secretion of the protein from infected cells. Post-translationally, acetylated by host KAT5. Acetylation modulates NS3 RNA-binding and unwinding activities and plays an important positive role for viral replication. Phosphorylated on serines residues. This phosphorylation may trigger NS5 nuclear localization.

The protein localises to the virion. Its subcellular location is the host nucleus. It localises to the host cytoplasm. It is found in the host perinuclear region. The protein resides in the secreted. The protein localises to the virion membrane. Its subcellular location is the host endoplasmic reticulum membrane. The catalysed reaction is Selective hydrolysis of -Xaa-Xaa-|-Yaa- bonds in which each of the Xaa can be either Arg or Lys and Yaa can be either Ser or Ala.. The enzyme catalyses RNA(n) + a ribonucleoside 5'-triphosphate = RNA(n+1) + diphosphate. It catalyses the reaction a ribonucleoside 5'-triphosphate + H2O = a ribonucleoside 5'-diphosphate + phosphate + H(+). It carries out the reaction ATP + H2O = ADP + phosphate + H(+). The catalysed reaction is a 5'-end (5'-triphosphoguanosine)-ribonucleoside in mRNA + S-adenosyl-L-methionine = a 5'-end (N(7)-methyl 5'-triphosphoguanosine)-ribonucleoside in mRNA + S-adenosyl-L-homocysteine. The enzyme catalyses a 5'-end (N(7)-methyl 5'-triphosphoguanosine)-ribonucleoside in mRNA + S-adenosyl-L-methionine = a 5'-end (N(7)-methyl 5'-triphosphoguanosine)-(2'-O-methyl-ribonucleoside) in mRNA + S-adenosyl-L-homocysteine + H(+). In terms of biological role, plays a role in virus budding by binding to the cell membrane and gathering the viral RNA into a nucleocapsid that forms the core of a mature virus particle. During virus entry, may induce genome penetration into the host cytoplasm after hemifusion induced by the surface proteins. Can migrate to the cell nucleus where it modulates host functions. Overcomes the anti-viral effects of host EXOC1 by sequestering and degrading the latter through the proteasome degradation pathway. Its function is as follows. Inhibits RNA silencing by interfering with host Dicer. Functionally, prevents premature fusion activity of envelope proteins in trans-Golgi by binding to envelope protein E at pH6.0. After virion release in extracellular space, gets dissociated from E dimers. Acts as a chaperone for envelope protein E during intracellular virion assembly by masking and inactivating envelope protein E fusion peptide. prM is the only viral peptide matured by host furin in the trans-Golgi network probably to avoid catastrophic activation of the viral fusion activity in acidic Golgi compartment prior to virion release. prM-E cleavage is inefficient, and many virions are only partially matured. These uncleaved prM would play a role in immune evasion. In terms of biological role, may play a role in virus budding. Exerts cytotoxic effects by activating a mitochondrial apoptotic pathway through M ectodomain. May display a viroporin activity. Its function is as follows. Binds to host cell surface receptor and mediates fusion between viral and cellular membranes. Envelope protein is synthesized in the endoplasmic reticulum in the form of heterodimer with protein prM. They play a role in virion budding in the ER, and the newly formed immature particle is covered with 60 spikes composed of heterodimer between precursor prM and envelope protein E. The virion is transported to the Golgi apparatus where the low pH causes dissociation of PrM-E heterodimers and formation of E homodimers. prM-E cleavage is inefficient, and many virions are only partially matured. These uncleaved prM would play a role in immune evasion. Functionally, involved in immune evasion, pathogenesis and viral replication. Once cleaved off the polyprotein, is targeted to three destinations: the viral replication cycle, the plasma membrane and the extracellular compartment. Essential for viral replication. Required for formation of the replication complex and recruitment of other non-structural proteins to the ER-derived membrane structures. Excreted as a hexameric lipoparticle that plays a role against host immune response. Antagonizing the complement function. Binds to the host macrophages and dendritic cells. Inhibits signal transduction originating from Toll-like receptor 3 (TLR3). Component of the viral RNA replication complex that functions in virion assembly and antagonizes the host alpha/beta interferon antiviral response. Inhibits STAT2 translocation in the nucleus after IFN-alpha treatment. In terms of biological role, required cofactor for the serine protease function of NS3. May have membrane-destabilizing activity and form viroporins. Inhibits STAT2 translocation in the nucleus after IFN-alpha treatment. Its function is as follows. Displays three enzymatic activities: serine protease, NTPase and RNA helicase. NS3 serine protease, in association with NS2B, performs its autocleavage and cleaves the polyprotein at dibasic sites in the cytoplasm: C-prM, NS2A-NS2B, NS2B-NS3, NS3-NS4A, NS4A-2K and NS4B-NS5. NS3 RNA helicase binds RNA and unwinds dsRNA in the 3' to 5' direction. NS3 supports the separation of RNA daughter and template strands during viral replication. The helicase part is involved in the inhibition of phosphorylation of host STAT1, and thereby inhibition of host type-I IFN signaling. In addition, NS3 assists the initiation of replication by unwinding the RNA secondary structure in the 3' non-translated region (NTR). Inhibits STAT2 translocation in the nucleus after IFN-alpha treatment. Functionally, regulates the ATPase activity of the NS3 helicase activity. NS4A allows NS3 helicase to conserve energy during unwinding. Induces host ER membrane rearrangements to provide a compartment where viral replication can take part. Inhibits STAT2 translocation in the nucleus after IFN-alpha treatment. Functions as a signal peptide for NS4B and is required for the interferon antagonism activity of the latter. In terms of biological role, induces the formation of ER-derived membrane vesicles where the viral replication takes place. Inhibits interferon (IFN)-induced host STAT1 phosphorylation and nuclear translocation, thereby preventing the establishment of cellular antiviral state by blocking the IFN-alpha/beta pathway. Inhibits STAT2 translocation in the nucleus after IFN-alpha treatment. Its function is as follows. Replicates the viral (+) and (-) genome, and performs the capping of genomes in the cytoplasm. NS5 methylates viral RNA cap at guanine N-7 and ribose 2'-O positions. Besides its role in genome replication, also prevents the establishment of cellular antiviral state by blocking the interferon-alpha/beta (IFN-alpha/beta) signaling pathway. Inhibits host JAK1 and TYK2 phosphorylation, thereby preventing activation of JAK-STAT signaling pathway. May transcriptionally regulate host genes involved in antiviral response when localized in the nucleus. The sequence is that of Genome polyprotein from Ciconiiformes (storks and others).